Reading from the N-terminus, the 345-residue chain is Platelet-derived growth factor C (345 aa).

Positions 1–22 (MLLLGLLLLTSALAGQRTGTRA) are cleaved as a signal peptide. Residues 24–33 (SNLSSKLQLS) show a composition bias toward polar residues. Positions 24 to 45 (SNLSSKLQLSSDKEQNGVQDPR) are disordered. An N-linked (GlcNAc...) asparagine glycan is attached at asparagine 25. The span at 34–45 (SDKEQNGVQDPR) shows a compositional bias: basic and acidic residues. The CUB domain occupies 46–163 (HERVVTISGN…PGFCIHYSII (118 aa)). Asparagine 55 carries N-linked (GlcNAc...) asparagine glycosylation. Intrachain disulfides connect cysteine 104–cysteine 124, cysteine 250–cysteine 294, cysteine 280–cysteine 335, and cysteine 287–cysteine 337.

This sequence belongs to the PDGF/VEGF growth factor family. In terms of assembly, homodimer; disulfide-linked. Interacts with PDGFRA homodimers, and with heterodimers formed by PDGFRA and PDGFRB. Interacts (via CUB domain) with PLAT (via kringle domain). In terms of processing, proteolytic removal of the N-terminal CUB domain releasing the core domain is necessary for unmasking the receptor-binding epitopes of the core domain. Cleavage after basic residues in the hinge region (region connecting the CUB and growth factor domains) gives rise to the receptor-binding form. Cleaved by PLAT and PLG. Post-translationally, sumoylated with SUMO1. N-glycosylated. Highly expressed in the kidney and adrenal gland. In the kidney, it is expressed in arteriolar smooth muscle cells and in epithelial cells of individual segments (at protein level).

It is found in the cytoplasm. Its subcellular location is the cytosol. The protein localises to the secreted. The protein resides in the nucleus. It localises to the cytoplasmic granule. It is found in the cell membrane. Growth factor that plays an essential role in the regulation of embryonic development, cell proliferation, cell migration, survival and chemotaxis. Potent mitogen and chemoattractant for cells of mesenchymal origin. Required for normal skeleton formation during embryonic development, especially for normal development of the craniofacial skeleton and for normal development of the palate. Required for normal skin morphogenesis during embryonic development. Plays an important role in wound healing, where it appears to be involved in three stages: inflammation, proliferation and remodeling. Plays an important role in angiogenesis and blood vessel development. Involved in fibrotic processes, in which transformation of interstitial fibroblasts into myofibroblasts plus collagen deposition occurs. The CUB domain has mitogenic activity in coronary artery smooth muscle cells, suggesting a role beyond the maintenance of the latency of the PDGF domain. In the nucleus, PDGFC seems to have additional function. The polypeptide is Platelet-derived growth factor C (Pdgfc) (Rattus norvegicus (Rat)).